A 481-amino-acid polypeptide reads, in one-letter code: UDP-glycosyltransferase 72E3 (481 aa).

Catalysis depends on histidine 18, which acts as the Proton acceptor. Histidine 18 provides a ligand contact to an anthocyanidin. Aspartate 111 (charge relay) is an active-site residue. UDP-alpha-D-glucose-binding residues include alanine 346, glutamine 348, histidine 363, tryptophan 366, serine 368, and glutamate 371. Residue alanine 386 coordinates an anthocyanidin. Positions 387 and 388 each coordinate UDP-alpha-D-glucose.

This sequence belongs to the UDP-glycosyltransferase family. As to expression, expressed in seedlings and roots, and at lower levels in flowers and siliques.

It catalyses the reaction (E)-4-coumarate + UDP-alpha-D-glucose = 4-O-(beta-D-glucosyl)-trans-4-coumarate + UDP + H(+). It carries out the reaction (E)-sinapyl alcohol + UDP-alpha-D-glucose = 4-O-(beta-D-glucosyl)-trans-4-sinapoyl alcohol + UDP + H(+). The catalysed reaction is (E)-coniferol + UDP-alpha-D-glucose = 4-O-(beta-D-glucosyl)-(E)-coniferol + UDP + H(+). The enzyme catalyses (E)-sinapate + UDP-alpha-D-glucose = 4-O-(beta-D-glucosyl)-trans-sinapate + UDP + H(+). It catalyses the reaction (E)-coniferaldehyde + UDP-alpha-D-glucose = 4-O-(beta-D-glucosyl)-4-(E)-coniferyl aldehyde + UDP + H(+). It carries out the reaction (E)-sinapaldehyde + UDP-alpha-D-glucose = 4-O-(beta-D-glucosyl)-4-trans-sinapoyl aldehyde + UDP + H(+). Its function is as follows. Involved in the O-glucosylation of monolignols (alcohol monomers of lignin). Glucosylates coniferyl alcohol to form coniferyl alcohol 4-O-glucoside. Glucosylates sinapyl alcohol to form sinapyl alcohol 4-O-glucoside. Possesses low activity with sinapate as substrate. This chain is UDP-glycosyltransferase 72E3, found in Arabidopsis thaliana (Mouse-ear cress).